A 397-amino-acid polypeptide reads, in one-letter code: Argininosuccinate synthase (397 aa).

ATP is bound at residue 8 to 16 (AYSGGLDTS). Y87 contributes to the L-citrulline binding site. G117 lines the ATP pocket. Residues T119, N123, and D124 each contribute to the L-aspartate site. N123 contributes to the L-citrulline binding site. Positions 127, 175, 259, and 271 each coordinate L-citrulline.

This sequence belongs to the argininosuccinate synthase family. Type 1 subfamily. As to quaternary structure, homotetramer.

It is found in the cytoplasm. It catalyses the reaction L-citrulline + L-aspartate + ATP = 2-(N(omega)-L-arginino)succinate + AMP + diphosphate + H(+). The protein operates within amino-acid biosynthesis; L-arginine biosynthesis; L-arginine from L-ornithine and carbamoyl phosphate: step 2/3. This chain is Argininosuccinate synthase, found in Streptomyces clavuligerus.